Reading from the N-terminus, the 463-residue chain is Protein DML1 (463 aa).

This sequence belongs to the misato family.

It is found in the mitochondrion. Functionally, involved in the partitioning of the mitochondrial organelle and mitochondrial DNA (mtDNA) inheritance. The protein is Protein DML1 (DML1) of Debaryomyces hansenii (strain ATCC 36239 / CBS 767 / BCRC 21394 / JCM 1990 / NBRC 0083 / IGC 2968) (Yeast).